Consider the following 370-residue polypeptide: 3-dehydroquinate synthase (370 aa).

NAD(+) is bound by residues 107–111 (GVIGD), 131–132 (TS), Lys-144, and Lys-153. Positions 186, 249, and 267 each coordinate Zn(2+).

The protein belongs to the sugar phosphate cyclases superfamily. Dehydroquinate synthase family. Co(2+) is required as a cofactor. Requires Zn(2+) as cofactor. NAD(+) serves as cofactor.

The protein resides in the cytoplasm. The enzyme catalyses 7-phospho-2-dehydro-3-deoxy-D-arabino-heptonate = 3-dehydroquinate + phosphate. It functions in the pathway metabolic intermediate biosynthesis; chorismate biosynthesis; chorismate from D-erythrose 4-phosphate and phosphoenolpyruvate: step 2/7. In terms of biological role, catalyzes the conversion of 3-deoxy-D-arabino-heptulosonate 7-phosphate (DAHP) to dehydroquinate (DHQ). In Jannaschia sp. (strain CCS1), this protein is 3-dehydroquinate synthase.